Here is a 442-residue protein sequence, read N- to C-terminus: Envelope glycoprotein D (442 aa).

The signal sequence occupies residues 1-19; sequence MPAVLLVLYVNPPPSVCIL. The Virion surface portion of the chain corresponds to 20–405; sequence TQKLSLGLYN…NSTFVGISVG (386 aa). N-linked (GlcNAc...) asparagine; by host glycosylation is found at Asn-103 and Asn-111. 3 disulfides stabilise this stretch: Cys-138–Cys-259, Cys-176–Cys-273, and Cys-188–Cys-197. The disordered stretch occupies residues 331-364; that stretch reads PDNHPGFDSVESEITQNKTDPKPGQADPKPNQPF. Asn-347 and Asn-396 each carry an N-linked (GlcNAc...) asparagine; by host glycan. A helical transmembrane segment spans residues 406–422; that stretch reads LGIAGLVLVGVILYVCL. Over 423–442 the chain is Intravirion; sequence RRKKELKVCTERLDSPTLDL.

The protein belongs to the herpesviridae glycoprotein D family.

It is found in the virion membrane. Envelope glycoprotein that binds to host cell entry receptors, promoting the virus entry into host cells. May trigger fusion with host membrane, by recruiting the fusion machinery composed of gB and gH/gL. This is Envelope glycoprotein D (gD) from Equine herpesvirus 1 (strain Kentucky A) (EHV-1).